A 361-amino-acid polypeptide reads, in one-letter code: Probable dual-specificity RNA methyltransferase RlmN (361 aa).

Glu-91 (proton acceptor) is an active-site residue. The Radical SAM core domain maps to 97-335; the sequence is QHYGLSVCVT…CVVRQEHGTD (239 aa). The cysteines at positions 104 and 340 are disulfide-linked. Cys-111, Cys-115, and Cys-118 together coordinate [4Fe-4S] cluster. S-adenosyl-L-methionine is bound by residues 163–164, Ser-195, 218–220, and Asn-296; these read GE and SLH. Residue Cys-340 is the S-methylcysteine intermediate of the active site.

The protein belongs to the radical SAM superfamily. RlmN family. The cofactor is [4Fe-4S] cluster.

It localises to the cytoplasm. The enzyme catalyses adenosine(2503) in 23S rRNA + 2 reduced [2Fe-2S]-[ferredoxin] + 2 S-adenosyl-L-methionine = 2-methyladenosine(2503) in 23S rRNA + 5'-deoxyadenosine + L-methionine + 2 oxidized [2Fe-2S]-[ferredoxin] + S-adenosyl-L-homocysteine. The catalysed reaction is adenosine(37) in tRNA + 2 reduced [2Fe-2S]-[ferredoxin] + 2 S-adenosyl-L-methionine = 2-methyladenosine(37) in tRNA + 5'-deoxyadenosine + L-methionine + 2 oxidized [2Fe-2S]-[ferredoxin] + S-adenosyl-L-homocysteine. In terms of biological role, specifically methylates position 2 of adenine 2503 in 23S rRNA and position 2 of adenine 37 in tRNAs. This chain is Probable dual-specificity RNA methyltransferase RlmN, found in Streptococcus mutans serotype c (strain ATCC 700610 / UA159).